The primary structure comprises 116 residues: Iron-sulfur cluster insertion protein ErpA (116 aa).

Cys44, Cys108, and Cys110 together coordinate iron-sulfur cluster.

The protein belongs to the HesB/IscA family. In terms of assembly, homodimer. Iron-sulfur cluster serves as cofactor.

Its function is as follows. Required for insertion of 4Fe-4S clusters for at least IspG. The protein is Iron-sulfur cluster insertion protein ErpA of Shewanella sp. (strain ANA-3).